Consider the following 136-residue polypeptide: ATP synthase epsilon chain, chloroplastic (136 aa).

This sequence belongs to the ATPase epsilon chain family. F-type ATPases have 2 components, CF(1) - the catalytic core - and CF(0) - the membrane proton channel. CF(1) has five subunits: alpha(3), beta(3), gamma(1), delta(1), epsilon(1). CF(0) has three main subunits: a, b and c.

The protein localises to the plastid. Its subcellular location is the chloroplast thylakoid membrane. Produces ATP from ADP in the presence of a proton gradient across the membrane. This Tetradesmus obliquus (Green alga) protein is ATP synthase epsilon chain, chloroplastic.